The following is a 699-amino-acid chain: Long-chain-fatty-acid--CoA ligase 1 (699 aa).

An N-acetylmethionine modification is found at Met-1. Residue Tyr-9 is modified to 3'-nitrotyrosine. A helical; Signal-anchor for type III membrane protein transmembrane segment spans residues 25–45; that stretch reads LPTNTLMGFGAFAALTTFWYA. Over 46–699 the chain is Cytoplasmic; that stretch reads TRPKALKPPC…IDELYATIKI (654 aa). At Tyr-85 the chain carries Phosphotyrosine. Tyr-86 bears the 3'-nitrotyrosine mark. O-linked (GlcNAc) serine glycosylation occurs at Ser-136. Lys-208, Lys-357, and Lys-387 each carry N6-acetyllysine. Ser-621 carries the post-translational modification Phosphoserine. Lys-633 is subject to N6-acetyllysine.

The protein belongs to the ATP-dependent AMP-binding enzyme family. Mg(2+) serves as cofactor.

Its subcellular location is the mitochondrion outer membrane. The protein resides in the peroxisome membrane. The protein localises to the microsome membrane. It localises to the endoplasmic reticulum membrane. The catalysed reaction is a long-chain fatty acid + ATP + CoA = a long-chain fatty acyl-CoA + AMP + diphosphate. The enzyme catalyses (5Z,8Z,11Z,14Z)-eicosatetraenoate + ATP + CoA = (5Z,8Z,11Z,14Z)-eicosatetraenoyl-CoA + AMP + diphosphate. It catalyses the reaction 3,7,11,15-tetramethylhexadecanoate + ATP + CoA = phytanoyl-CoA + AMP + diphosphate. It carries out the reaction hexadecanoate + ATP + CoA = hexadecanoyl-CoA + AMP + diphosphate. The catalysed reaction is (E)-hexadec-2-enoate + ATP + CoA = (2E)-hexadecenoyl-CoA + AMP + diphosphate. The enzyme catalyses 2,6,10,14-tetramethylpentadecanoate + ATP + CoA = pristanoyl-CoA + AMP + diphosphate. It catalyses the reaction 14,15-epoxy-(5Z,8Z,11Z)-eicosatrienoate + ATP + CoA = 14,15-epoxy-(5Z,8Z,11Z)-eicosatrienoyl-CoA + AMP + diphosphate. It carries out the reaction 5-hydroxy-(6E,8Z,11Z,14Z)-eicosatetraenoate + ATP + CoA = 5-hydroxy-(6E,8Z,11Z,14Z)-eicosatetraenoyl-CoA + AMP + diphosphate. The catalysed reaction is 12-hydroxy-(5Z,8Z,10E,14Z)-eicosatetraenoate + ATP + CoA = 12-hydroxy-(5Z,8Z,10E,14Z)-eicosatetraenoyl-CoA + AMP + diphosphate. The enzyme catalyses 15-hydroxy-(5Z,8Z,11Z,13E)-eicosatetraenoate + ATP + CoA = 15-hydroxy-(5Z,8Z,11Z,13E)-eicosatetraenoyl-CoA + AMP + diphosphate. It catalyses the reaction (9Z)-octadecenoate + ATP + CoA = (9Z)-octadecenoyl-CoA + AMP + diphosphate. Its activity is regulated as follows. Inhibited at high temperature and by arachidonate. Functionally, catalyzes the conversion of long-chain fatty acids to their active form acyl-CoAs for both synthesis of cellular lipids, and degradation via beta-oxidation. Preferentially uses palmitoleate, oleate and linoleate. Preferentially activates arachidonate than epoxyeicosatrienoic acids (EETs) or hydroxyeicosatrienoic acids (HETEs). This Mus musculus (Mouse) protein is Long-chain-fatty-acid--CoA ligase 1.